The following is an 819-amino-acid chain: ATP-dependent DNA helicase PIF4 (819 aa).

The N-terminal 84 residues, 1–84, are a transit peptide targeting the mitochondrion; the sequence is MLLNSTRTLL…RQASSAGHND (84 aa). Residues 76-101 form a disordered region; sequence QASSAGHNDLGLQEKEKSSGDESAFS. Position 126 to 133 (126 to 133) interacts with ATP; it reads GGAGVGKS. The DNA-binding element occupies 734 to 754; sequence HIIYVAASRVKKFSQLRMINV.

The protein belongs to the helicase family. PIF1 subfamily. In terms of assembly, monomer. Requires Mg(2+) as cofactor.

It is found in the mitochondrion matrix. It localises to the kinetoplast. It carries out the reaction Couples ATP hydrolysis with the unwinding of duplex DNA at the replication fork by translocating in the 5'-3' direction. This creates two antiparallel DNA single strands (ssDNA). The leading ssDNA polymer is the template for DNA polymerase III holoenzyme which synthesizes a continuous strand.. The catalysed reaction is ATP + H2O = ADP + phosphate + H(+). Functionally, DNA-dependent ATPase and 5'-3' DNA helicase required for the maintenance of mitochondrial (kinetoplast) genome stability. This Trypanosoma brucei brucei (strain 927/4 GUTat10.1) protein is ATP-dependent DNA helicase PIF4.